A 550-amino-acid chain; its full sequence is Acetyl-coenzyme A transporter 1 (550 aa).

2 stretches are compositionally biased toward basic and acidic residues: residues 1-12 (MSPTISHKDSSR) and 36-52 (DDSR…REVL). The interval 1 to 58 (MSPTISHKDSSRQRRSGMFSHALDMKSGPLPPGGWDDSRRDSVGGEGDREVLLGDAGP) is disordered. The Cytoplasmic segment spans residues 1 to 74 (MSPTISHKDS…PRSYRSELSS (74 aa)). Ser42 carries the phosphoserine modification. Residues 75–95 (ILLLLFLYVLQGIPLGLAGSI) form a helical membrane-spanning segment. Topologically, residues 96-113 (PLILQSKNVSYTDQAFFS) are extracellular. N-linked (GlcNAc...) asparagine glycosylation is present at Asn103. Residues 114-134 (FVFWPFSLKLLWAPLVDAVYF) form a helical membrane-spanning segment. The Cytoplasmic segment spans residues 135 to 141 (KNFGRRK). Residues 142–162 (SWLVPTQYTLGIFMIYLSTQV) form a helical membrane-spanning segment. The Extracellular segment spans residues 163-175 (DRLLGNIDGRTPD). Residues 176 to 196 (VVALTVTFFLFEFLAATQDIA) form a helical membrane-spanning segment. The Cytoplasmic portion of the chain corresponds to 197–217 (VDGWALTMLSRENVGYASTCN). Residues 218-238 (SVGQTAGYFLGNVLFLALESA) form a helical membrane-spanning segment. Over 239–256 (DFCNKYLRFQPQPRGIVT) the chain is Extracellular. The helical transmembrane segment at 257-277 (LSDFLFFWGTVFLITTTLVAL) threads the bilayer. Over 278–300 (LKKENREASIVKEETQGITDTYK) the chain is Cytoplasmic. The helical transmembrane segment at 301-321 (LLFSIIKMPAVLAFCLLILTS) threads the bilayer. Over 322 to 344 (KIGFSAADAVTGLKLVEEGVPKE) the chain is Extracellular. A helical transmembrane segment spans residues 345–365 (HLALLAVPMVPLQIILPLLIS). The Cytoplasmic segment spans residues 366-375 (KYTAGPQPLN). A helical membrane pass occupies residues 376 to 396 (IFYKAMPYRLLLGLEYALLVW). At 397-405 (WTPKVEHQG) the chain is on the extracellular side. Residues 406–426 (GFPLYYYIIVLLSYALHQVTL) form a helical membrane-spanning segment. Residues 427 to 509 (YSMYVSIMAF…LGGSCVTALD (83 aa)) lie on the Cytoplasmic side of the membrane. The helical transmembrane segment at 510–530 (GYYVESIICVLIGFGWWFFLG) threads the bilayer. Residues 531–550 (PKFKKLQDEGPSSWKCKRNN) are Extracellular-facing.

This sequence belongs to the SLC33A transporter family. Homodimerizes. As to expression, expressed in all adult tissues examined including brain, heart, kidney, liver and spleen, with maximum expression in liver and kidney.

Its subcellular location is the endoplasmic reticulum membrane. It catalyses the reaction acetyl-CoA(in) = acetyl-CoA(out). Acetyl-CoA transporter that mediates active acetyl-CoA import through the endoplasmic reticulum (ER) membrane into the ER lumen where specific ER-based acetyl-CoA:lysine acetyltransferases are responsible for the acetylation of ER-based protein substrate, such as BACE1. Necessary for O-acetylation of gangliosides. The sequence is that of Acetyl-coenzyme A transporter 1 (Slc33a1) from Mus musculus (Mouse).